Consider the following 411-residue polypeptide: Elongation factor 1-gamma (411 aa).

The 82-residue stretch at 3–84 folds into the GST N-terminal domain; it reads LTLWSGVNPE…HIARLDRSGG (82 aa). Positions 90–216 constitute a GST C-terminal domain; sequence TPLEGSQVDM…QGATFGAREG (127 aa). Positions 212 to 265 are disordered; it reads GAREGGAKGQGRGCARPGREEAERAAAAADGAEEEDEAPREKKKPNPLDELPPS. Gly residues predominate over residues 214–223; the sequence is REGGAKGQGR. Positions 255-411 constitute an EF-1-gamma C-terminal domain; it reads KPNPLDELPP…RPVLEGRVFK (157 aa).

In terms of assembly, EF-1 is composed of four subunits: alpha, beta, delta, and gamma.

Probably plays a role in anchoring the complex to other cellular components. In Trypanosoma cruzi, this protein is Elongation factor 1-gamma.